Here is a 28-residue protein sequence, read N- to C-terminus: Endoglucanase (28 aa).

Residue glutamate 20 is the Nucleophile of the active site.

Belongs to the glycosyl hydrolase 5 (cellulase A) family.

Its subcellular location is the cell membrane. It carries out the reaction Endohydrolysis of (1-&gt;4)-beta-D-glucosidic linkages in cellulose, lichenin and cereal beta-D-glucans.. This chain is Endoglucanase, found in Schizophyllum commune (Split gill fungus).